Reading from the N-terminus, the 680-residue chain is E3 ubiquitin-protein ligase brl2 (680 aa).

Residues 44–72 (RSIQFDELESKIEGLQNLAEEKLKVLATL) are a coiled coil. The tract at residues 206-233 (PQSTKVKEEATTSSKGKDEEKKVSTVEQ) is disordered. The span at 210–229 (KVKEEATTSSKGKDEEKKVS) shows a compositional bias: basic and acidic residues. Coiled-coil stretches lie at residues 261 to 288 (LDSNVNEMDKLIMERENALNNVETTNLK), 353 to 399 (MQND…ETMV), and 485 to 609 (DSLH…LKDT). The segment at 627 to 667 (CSVCNFERWKDRIISLCGHGFCYQCIQKRIETRQRRCPICG) adopts an RING-type zinc-finger fold.

This sequence belongs to the BRE1 family. Component of the histone H2B ubiquitin ligase complex (HULC) composed of at least brl1, brl2, rhp6 and shf1.

Its subcellular location is the nucleus. It carries out the reaction S-ubiquitinyl-[E2 ubiquitin-conjugating enzyme]-L-cysteine + [acceptor protein]-L-lysine = [E2 ubiquitin-conjugating enzyme]-L-cysteine + N(6)-ubiquitinyl-[acceptor protein]-L-lysine.. It functions in the pathway protein modification; protein ubiquitination. E3 ubiquitin-protein ligase which belongs to the histone H2B ubiquitin ligase complex (HULC) which mediates monoubiquitination of histone H2B to form H2BK123ub1. H2BK123ub1 gives a specific tag for epigenetic transcriptional activation and is also a prerequisite for H3K4me and H3K79me formation. The chain is E3 ubiquitin-protein ligase brl2 (brl2) from Schizosaccharomyces pombe (strain 972 / ATCC 24843) (Fission yeast).